The following is a 500-amino-acid chain: Na(+)/H(+) antiporter NhaB (500 aa).

12 helical membrane-spanning segments follow: residues 28–50, 68–88, 98–118, 121–141, 145–165, 205–225, 244–264, 311–331, 350–370, 394–414, 449–469, and 477–497; these read FLLL…VLVG, GGLL…ALYA, LLLM…LLLF, LLLG…LAAL, FLDA…FFAV, LLMH…VGEP, QVAP…VLLE, VLIV…LLVI, FQEA…VAVI, MLFI…VATI, VATP…IAPL, and MVWM…WAVS.

This sequence belongs to the NhaB Na(+)/H(+) (TC 2.A.34) antiporter family.

The protein localises to the cell inner membrane. The enzyme catalyses 2 Na(+)(in) + 3 H(+)(out) = 2 Na(+)(out) + 3 H(+)(in). Its function is as follows. Na(+)/H(+) antiporter that extrudes sodium in exchange for external protons. This is Na(+)/H(+) antiporter NhaB from Pseudomonas aeruginosa (strain UCBPP-PA14).